Consider the following 222-residue polypeptide: MKDLPADLRPREKLLARGPAALADAELLALLLRTGLKGQGVLQLAQALLDRFGGLSGLLATDTAELGSVKGLGPAKRAELAAVLEIARRSLASRLAQTPVFDSPQAVKDYLQLQLASKPHEVFAVLFLDTQHRLLAFEELFRGTLNQASVYPREVVKRALALNAAAAILAHNHPSGVAEPSRADEALTQALKAALALVDVRVLDHFVVARGSVVSFAERGLL.

One can recognise an MPN domain in the interval 100–222 (VFDSPQAVKD…VVSFAERGLL (123 aa)). Zn(2+) contacts are provided by H171, H173, and D184. The JAMM motif signature appears at 171–184 (HNHPSGVAEPSRAD).

Belongs to the UPF0758 family.

The sequence is that of UPF0758 protein Mpe_A2695 from Methylibium petroleiphilum (strain ATCC BAA-1232 / LMG 22953 / PM1).